A 205-amino-acid polypeptide reads, in one-letter code: Large ribosomal subunit protein uL3 (205 aa).

This sequence belongs to the universal ribosomal protein uL3 family. In terms of assembly, part of the 50S ribosomal subunit. Forms a cluster with proteins L14 and L19.

In terms of biological role, one of the primary rRNA binding proteins, it binds directly near the 3'-end of the 23S rRNA, where it nucleates assembly of the 50S subunit. The chain is Large ribosomal subunit protein uL3 from Bacteroides thetaiotaomicron (strain ATCC 29148 / DSM 2079 / JCM 5827 / CCUG 10774 / NCTC 10582 / VPI-5482 / E50).